Here is a 269-residue protein sequence, read N- to C-terminus: Formamidopyrimidine-DNA glycosylase (269 aa).

Pro2 (schiff-base intermediate with DNA) is an active-site residue. Glu3 functions as the Proton donor in the catalytic mechanism. Lys57 acts as the Proton donor; for beta-elimination activity in catalysis. Residues His90, Arg109, and Lys150 each contribute to the DNA site. The FPG-type zinc-finger motif lies at 235 to 269; sequence QVYGKGGKPCPRCDNPLSEMKIGQRASVFCSECQK. Arg259 functions as the Proton donor; for delta-elimination activity in the catalytic mechanism.

This sequence belongs to the FPG family. In terms of assembly, monomer. Zn(2+) is required as a cofactor.

The catalysed reaction is Hydrolysis of DNA containing ring-opened 7-methylguanine residues, releasing 2,6-diamino-4-hydroxy-5-(N-methyl)formamidopyrimidine.. It carries out the reaction 2'-deoxyribonucleotide-(2'-deoxyribose 5'-phosphate)-2'-deoxyribonucleotide-DNA = a 3'-end 2'-deoxyribonucleotide-(2,3-dehydro-2,3-deoxyribose 5'-phosphate)-DNA + a 5'-end 5'-phospho-2'-deoxyribonucleoside-DNA + H(+). In terms of biological role, involved in base excision repair of DNA damaged by oxidation or by mutagenic agents. Acts as a DNA glycosylase that recognizes and removes damaged bases. Has a preference for oxidized purines, such as 7,8-dihydro-8-oxoguanine (8-oxoG). Has AP (apurinic/apyrimidinic) lyase activity and introduces nicks in the DNA strand. Cleaves the DNA backbone by beta-delta elimination to generate a single-strand break at the site of the removed base with both 3'- and 5'-phosphates. The protein is Formamidopyrimidine-DNA glycosylase of Photobacterium profundum (strain SS9).